Reading from the N-terminus, the 211-residue chain is Probable GTP-binding protein EngB (211 aa).

In terms of domain architecture, EngB-type G spans 26–200 (SGIEVAFAGR…RQKLDNWFST (175 aa)). Residues 34 to 41 (GRSNAGKS), 61 to 65 (GRTQL), 79 to 82 (DLPG), 146 to 149 (TKAD), and 179 to 181 (FSS) contribute to the GTP site. Positions 41 and 63 each coordinate Mg(2+).

This sequence belongs to the TRAFAC class TrmE-Era-EngA-EngB-Septin-like GTPase superfamily. EngB GTPase family. Requires Mg(2+) as cofactor.

Necessary for normal cell division and for the maintenance of normal septation. The sequence is that of Probable GTP-binding protein EngB from Pectobacterium carotovorum subsp. carotovorum (strain PC1).